The following is a 291-amino-acid chain: RPE-retinal G protein-coupled receptor (291 aa).

Over 1–15 (MAESGTLPTGFGELE) the chain is Extracellular. A helical transmembrane segment spans residues 16-36 (VLAVGTVLLVEALSGLSLNIL). Residues 37-52 (TILSFCKTPELRTPSH) are Cytoplasmic-facing. The chain crosses the membrane as a helical span at residues 53 to 73 (LLVLSLALADSGISLNALVAA). The Extracellular portion of the chain corresponds to 74-91 (TSSLLRRWPYGSEGCQAH). A disulfide bridge links Cys-88 with Cys-162. The helical transmembrane segment at 92–112 (GFQGFVTALASICSSAAVAWG) threads the bilayer. Residues 113–130 (RYHHFCTRSRLDWNTAVS) lie on the Cytoplasmic side of the membrane. A helical transmembrane segment spans residues 131–151 (LVFFVWLSSAFWAALPLLGWG). Residues 152–175 (HYDYEPLGTCCTLDYSRGDRNFTS) lie on the Extracellular side of the membrane. Residue Asn-172 is glycosylated (N-linked (GlcNAc...) asparagine). Residues 176-196 (FLFTMAFFNFLLPLFITVVSY) traverse the membrane as a helical segment. Residues 197-219 (RLMEQKLGKTSRPPVNTVLPART) are Cytoplasmic-facing. A helical membrane pass occupies residues 220 to 240 (LLLGWGPYALLYLYATIADAT). Over 241–247 (SISPKLQ) the chain is Extracellular. Residues 248 to 268 (MVPALIAKAVPTVNAMNYALG) form a helical membrane-spanning segment. Lys-255 is modified (N6-(retinylidene)lysine). Residues 269 to 291 (SEMVHRGIWQCLSPQRREHSREQ) are Cytoplasmic-facing.

The protein belongs to the G-protein coupled receptor 1 family. Opsin subfamily. Covalently binds all-trans- and 11-cis-retinal. As to expression, preferentially expressed at high levels in the retinal pigment epithelium (RPE) and Mueller cells of the neural retina.

The protein resides in the membrane. Functionally, receptor for all-trans- and 11-cis-retinal. Binds preferentially to the former and may catalyze the isomerization of the chromophore by a retinochrome-like mechanism. In Bos taurus (Bovine), this protein is RPE-retinal G protein-coupled receptor (RGR).